Consider the following 233-residue polypeptide: 2-C-methyl-D-erythritol 4-phosphate cytidylyltransferase (233 aa).

It belongs to the IspD/TarI cytidylyltransferase family. IspD subfamily.

It catalyses the reaction 2-C-methyl-D-erythritol 4-phosphate + CTP + H(+) = 4-CDP-2-C-methyl-D-erythritol + diphosphate. Its pathway is isoprenoid biosynthesis; isopentenyl diphosphate biosynthesis via DXP pathway; isopentenyl diphosphate from 1-deoxy-D-xylulose 5-phosphate: step 2/6. In terms of biological role, catalyzes the formation of 4-diphosphocytidyl-2-C-methyl-D-erythritol from CTP and 2-C-methyl-D-erythritol 4-phosphate (MEP). The protein is 2-C-methyl-D-erythritol 4-phosphate cytidylyltransferase of Nitrosomonas eutropha (strain DSM 101675 / C91 / Nm57).